We begin with the raw amino-acid sequence, 180 residues long: Ribulose bisphosphate carboxylase small subunit, chloroplastic (180 aa).

A chloroplast-targeting transit peptide spans 1 to 57; it reads MASVVASAAVVTPFAASAASTTKSSQIVSVQAGLKAGVFGGKSEWQTKTQTNGSRVS.

This sequence belongs to the RuBisCO small chain family. As to quaternary structure, heterohexadecamer of 8 large and 8 small subunits.

It localises to the plastid. It is found in the chloroplast. In terms of biological role, ruBisCO catalyzes two reactions: the carboxylation of D-ribulose 1,5-bisphosphate, the primary event in carbon dioxide fixation, as well as the oxidative fragmentation of the pentose substrate. Both reactions occur simultaneously and in competition at the same active site. Although the small subunit is not catalytic it is essential for maximal activity. The protein is Ribulose bisphosphate carboxylase small subunit, chloroplastic of Marchantia paleacea (Liverwort).